Reading from the N-terminus, the 141-residue chain is uncharacterized protein (141 aa).

Transmembrane regions (helical) follow at residues 32 to 52 (LIVLIFSILIAISAYISTSII), 69 to 89 (IIALISTFIGGIVAWLIIAGF), and 109 to 129 (FTGYGFLPNIVGALITIPIAY).

It localises to the cell membrane. This is an uncharacterized protein from Methanocaldococcus jannaschii (strain ATCC 43067 / DSM 2661 / JAL-1 / JCM 10045 / NBRC 100440) (Methanococcus jannaschii).